The sequence spans 435 residues: Methanethiol oxidase (435 aa).

A signal peptide spans 1 to 24 (MKKHLLAGACALAMGFAVIPGTFA).

It belongs to the selenium-binding protein family. Homotetramer. The cofactor is Cu cation.

The protein resides in the periplasm. The catalysed reaction is methanethiol + O2 + H2O = hydrogen sulfide + formaldehyde + H2O2 + H(+). Its pathway is organosulfur degradation. Inhibited by EDTA but not by EGTA. In terms of biological role, catalyzes the oxidation of methanethiol. Can also degrade ethanethiol, but not methanol, methylamine or dimethylsulfide. This chain is Methanethiol oxidase, found in Hyphomicrobium sp.